The chain runs to 541 residues: uncharacterized protein (541 aa).

Positions 1 to 55 (MTKTVTRAGGASGPQQFQSGGETMKYEITRRRFLAASSAVLAAPAIVTMVRPARA) form a signal peptide, tat-type signal. A disordered region spans residues 339–362 (RRSPSGISSPRSNRQPKAEALSAR). A compositionally biased stretch (low complexity) spans 341 to 351 (SPSGISSPRSN). Helical transmembrane passes span 379-399 (AIVWFARQVVIFSGIALMVFM), 420-440 (LPVLIFPWFILGGIVLAAHSG), 466-486 (LVSAGAFLMLGYQAYLVGEIA), and 500-520 (VGYFALAVGSVLVAIVTLAVA).

This sequence belongs to the bacterial solute-binding protein 7 family. In terms of processing, predicted to be exported by the Tat system. The position of the signal peptide cleavage has not been experimentally proven.

The protein resides in the cell membrane. This is an uncharacterized protein from Sinorhizobium fredii (strain NBRC 101917 / NGR234).